The primary structure comprises 540 residues: DEAD-box ATP-dependent RNA helicase 57 (540 aa).

Residues 24-73 are disordered; sequence DFARFRQGPPAPDVASAAAPSPEKKRKRQSKAKAKKSKKRRAEGADSASD. Residues 47-64 show a composition bias toward basic residues; the sequence is KKRKRQSKAKAKKSKKRR. Residues 101-129 adopt a coiled-coil conformation; sequence KSEDSEVVRRRKEVEREIERAAILRKKFD. Residues 146–174 carry the Q motif motif; it reads ELVSRYGCDSYLVGNLSKLGFQEPTPIQR. Positions 177-347 constitute a Helicase ATP-binding domain; it reads IPILLSGREC…RTIMHDAVRV (171 aa). 190–197 serves as a coordination point for ATP; the sequence is APTGSGKT. The DEAD box motif lies at 294 to 297; the sequence is DESD. The Helicase C-terminal domain maps to 375-519; the sequence is ALRQSFAESL…EVPSWIKALP (145 aa).

The protein belongs to the DEAD box helicase family. DDX52/ROK1 subfamily.

It carries out the reaction ATP + H2O = ADP + phosphate + H(+). The chain is DEAD-box ATP-dependent RNA helicase 57 from Oryza sativa subsp. japonica (Rice).